The following is a 326-amino-acid chain: Thioredoxin reductase (326 aa).

40-47 (TGNNKGGQ) contributes to the FAD binding site. The cysteines at positions 141 and 144 are disulfide-linked. 291–300 (DVIDHVYKQA) contacts FAD.

The protein belongs to the class-II pyridine nucleotide-disulfide oxidoreductase family. In terms of assembly, homodimer. FAD serves as cofactor.

The protein resides in the cytoplasm. It carries out the reaction [thioredoxin]-dithiol + NADP(+) = [thioredoxin]-disulfide + NADPH + H(+). In Buchnera aphidicola subsp. Baizongia pistaciae (strain Bp), this protein is Thioredoxin reductase (trxB).